The primary structure comprises 258 residues: Global transcriptional regulator CodY (258 aa).

Residues 1 to 156 (MSSLLSKTRR…SATIVGMEML (156 aa)) form a GAF domain region. Positions 204–223 (ASKIADKVGITRSVIVNALR) form a DNA-binding region, H-T-H motif.

It belongs to the CodY family.

It localises to the cytoplasm. In terms of biological role, DNA-binding global transcriptional regulator which is involved in the adaptive response to starvation and acts by directly or indirectly controlling the expression of numerous genes in response to nutrient availability. During rapid exponential growth, CodY is highly active and represses genes whose products allow adaptation to nutrient depletion. The chain is Global transcriptional regulator CodY from Clostridium botulinum (strain Alaska E43 / Type E3).